A 126-amino-acid polypeptide reads, in one-letter code: Profilin-3 (126 aa).

It belongs to the profilin family. In terms of assembly, occurs in many kinds of cells as a complex with monomeric actin in a 1:1 ratio. As to expression, in embryos, expression is specifically detected in body wall muscle cells. In adults, expression is localized to a striking dot-like fashion in body wall muscle.

It is found in the cytoplasm. The protein localises to the cytoskeleton. Its function is as follows. Binds to actin and affects the structure of the cytoskeleton. At high concentrations, profilin prevents the polymerization of actin, whereas it enhances it at low concentrations. By binding to PIP2, it inhibits the formation of IP3 and DG. Also binds to poly(L-proline) and phosphatidylinositol 4,5-bisphosphate micelles. The sequence is that of Profilin-3 (pfn-3) from Caenorhabditis elegans.